Reading from the N-terminus, the 158-residue chain is NAD(P)H-quinone oxidoreductase subunit J, chloroplastic (158 aa).

It belongs to the complex I 30 kDa subunit family. In terms of assembly, NDH is composed of at least 16 different subunits, 5 of which are encoded in the nucleus.

The protein localises to the plastid. The protein resides in the chloroplast thylakoid membrane. It catalyses the reaction a plastoquinone + NADH + (n+1) H(+)(in) = a plastoquinol + NAD(+) + n H(+)(out). The catalysed reaction is a plastoquinone + NADPH + (n+1) H(+)(in) = a plastoquinol + NADP(+) + n H(+)(out). In terms of biological role, NDH shuttles electrons from NAD(P)H:plastoquinone, via FMN and iron-sulfur (Fe-S) centers, to quinones in the photosynthetic chain and possibly in a chloroplast respiratory chain. The immediate electron acceptor for the enzyme in this species is believed to be plastoquinone. Couples the redox reaction to proton translocation, and thus conserves the redox energy in a proton gradient. This chain is NAD(P)H-quinone oxidoreductase subunit J, chloroplastic, found in Capsella bursa-pastoris (Shepherd's purse).